The primary structure comprises 130 residues: Phosphoribosyl-AMP cyclohydrolase (130 aa).

Mg(2+) is bound at residue aspartate 77. Cysteine 78 is a Zn(2+) binding site. 2 residues coordinate Mg(2+): aspartate 79 and aspartate 81. Residues cysteine 95 and cysteine 102 each coordinate Zn(2+).

The protein belongs to the PRA-CH family. As to quaternary structure, homodimer. Mg(2+) is required as a cofactor. The cofactor is Zn(2+).

Its subcellular location is the cytoplasm. It carries out the reaction 1-(5-phospho-beta-D-ribosyl)-5'-AMP + H2O = 1-(5-phospho-beta-D-ribosyl)-5-[(5-phospho-beta-D-ribosylamino)methylideneamino]imidazole-4-carboxamide. The protein operates within amino-acid biosynthesis; L-histidine biosynthesis; L-histidine from 5-phospho-alpha-D-ribose 1-diphosphate: step 3/9. In terms of biological role, catalyzes the hydrolysis of the adenine ring of phosphoribosyl-AMP. The sequence is that of Phosphoribosyl-AMP cyclohydrolase from Pseudomonas entomophila (strain L48).